We begin with the raw amino-acid sequence, 209 residues long: Large ribosomal subunit protein uL4 (209 aa).

The segment at 50–78 (STLKKGEVSGGGKKPYQQKHTGRARQGSI) is disordered.

This sequence belongs to the universal ribosomal protein uL4 family. As to quaternary structure, part of the 50S ribosomal subunit.

Its function is as follows. One of the primary rRNA binding proteins, this protein initially binds near the 5'-end of the 23S rRNA. It is important during the early stages of 50S assembly. It makes multiple contacts with different domains of the 23S rRNA in the assembled 50S subunit and ribosome. In terms of biological role, forms part of the polypeptide exit tunnel. This chain is Large ribosomal subunit protein uL4, found in Mycoplasmoides gallisepticum (strain R(low / passage 15 / clone 2)) (Mycoplasma gallisepticum).